Consider the following 398-residue polypeptide: Cyclic GMP-AMP synthase-like receptor (398 aa).

ATP contacts are provided by residues Ser57 and 69–71 (EFD). Residues Glu69, Asp71, and Asp192 each coordinate Mg(2+). GTP contacts are provided by residues Asp192 and 240–247 (SLSFQEQE). Residues 244–247 (QEQE), Lys265, and 277–281 (SYYIK) contribute to the ATP site. Residues Ile288, Glu289, and Asp292 each coordinate Mn(2+).

This sequence belongs to the mab-21 family. Mg(2+) is required as a cofactor. Requires Mn(2+) as cofactor.

It carries out the reaction GTP + ATP = 2',3'-cGAMP + 2 diphosphate. The catalysed reaction is GTP + ATP = pppGp(2'-5')A + diphosphate. The enzyme catalyses pppGp(2'-5')A = 2',3'-cGAMP + diphosphate. Its activity is regulated as follows. The enzyme activity is specifically activated by double-stranded RNA (dsRNA). Functionally, nucleotidyltransferase that catalyzes the formation of cyclic GMP-AMP (2',3'-cGAMP) from ATP and GTP and plays a key role in innate immunity. Acts as a key sensor of double-stranded RNA (dsRNA), the presence of dsRNA in the cytoplasm being a danger signal that triggers the immune responses. Directly binds dsRNA, activating the nucleotidyltransferase activity, leading to synthesis of 2',3'-cGAMP, a second messenger that binds to and activates Sting, thereby triggering the antiviral immune response via activation of the NF-kappa-B transcription factor Rel (Relish). The chain is Cyclic GMP-AMP synthase-like receptor from Tribolium castaneum (Red flour beetle).